The following is a 270-amino-acid chain: Non-structural maintenance of chromosomes element 1 homolog (270 aa).

The RING-type; atypical zinc-finger motif lies at C185–N226. A disordered region spans residues L236–R270. 2 stretches are compositionally biased toward polar residues: residues N237–T251 and S259–R270.

It belongs to the NSE1 family. Component of the SMC5-SMC6 complex.

The protein localises to the nucleus. It is found in the chromosome. The protein resides in the telomere. It carries out the reaction S-ubiquitinyl-[E2 ubiquitin-conjugating enzyme]-L-cysteine + [acceptor protein]-L-lysine = [E2 ubiquitin-conjugating enzyme]-L-cysteine + N(6)-ubiquitinyl-[acceptor protein]-L-lysine.. Functionally, RING-type zinc finger-containing E3 ubiquitin ligase that assembles with melanoma antigen protein (MAGE) to catalyze the direct transfer of ubiquitin from E2 ubiquitin-conjugating enzyme to a specific substrate. Within MAGE-RING ubiquitin ligase complex, MAGE stimulates and specifies ubiquitin ligase activity likely through recruitment and/or stabilization of the E2 ubiquitin-conjugating enzyme at the E3:substrate complex. Involved in maintenance of genome integrity, DNA damage response and DNA repair. This Xenopus laevis (African clawed frog) protein is Non-structural maintenance of chromosomes element 1 homolog (nsmce1).